Consider the following 60-residue polypeptide: Large ribosomal subunit protein bL32 (60 aa).

Positions 1–20 (MAVQKSRKSRSRRDMRRSHH) are enriched in basic residues. A disordered region spans residues 1-60 (MAVQKSRKSRSRRDMRRSHHHMEVAELSIDATTGEKHRRHHMTKDGFYRGRQLFKASQED).

The protein belongs to the bacterial ribosomal protein bL32 family.

The polypeptide is Large ribosomal subunit protein bL32 (Psychrobacter sp. (strain PRwf-1)).